The following is a 187-amino-acid chain: Adenylate kinase (187 aa).

10-15 serves as a coordination point for ATP; the sequence is GSGKGT. The tract at residues 30–59 is NMP; the sequence is STGDLLRSEVVAGTPLGLQAKQVMAQGDLV. Residues Thr31, Arg36, 57–59, 85–88, and Gln92 each bind AMP; these read DLV and GYPR. The tract at residues 126-136 is LID; it reads GRAQAEGREDD. An ATP-binding site is contributed by Arg127. Arg133 and Arg144 together coordinate AMP. Gly172 contacts ATP.

Belongs to the adenylate kinase family. In terms of assembly, monomer.

It is found in the cytoplasm. It catalyses the reaction AMP + ATP = 2 ADP. It participates in purine metabolism; AMP biosynthesis via salvage pathway; AMP from ADP: step 1/1. In terms of biological role, catalyzes the reversible transfer of the terminal phosphate group between ATP and AMP. Plays an important role in cellular energy homeostasis and in adenine nucleotide metabolism. This Xylella fastidiosa (strain M12) protein is Adenylate kinase.